A 455-amino-acid chain; its full sequence is Probable glycine dehydrogenase (decarboxylating) subunit 1 (455 aa).

It belongs to the GcvP family. N-terminal subunit subfamily. In terms of assembly, the glycine cleavage system is composed of four proteins: P, T, L and H. In this organism, the P 'protein' is a heterodimer of two subunits.

It catalyses the reaction N(6)-[(R)-lipoyl]-L-lysyl-[glycine-cleavage complex H protein] + glycine + H(+) = N(6)-[(R)-S(8)-aminomethyldihydrolipoyl]-L-lysyl-[glycine-cleavage complex H protein] + CO2. Functionally, the glycine cleavage system catalyzes the degradation of glycine. The P protein binds the alpha-amino group of glycine through its pyridoxal phosphate cofactor; CO(2) is released and the remaining methylamine moiety is then transferred to the lipoamide cofactor of the H protein. The chain is Probable glycine dehydrogenase (decarboxylating) subunit 1 from Francisella tularensis subsp. holarctica (strain FTNF002-00 / FTA).